A 325-amino-acid polypeptide reads, in one-letter code: GMP reductase (325 aa).

Cysteine 173 acts as the Thioimidate intermediate in catalysis. 202-225 (IIADGGIRHHGDIAKSVRFGAAMV) provides a ligand contact to NADP(+).

Belongs to the IMPDH/GMPR family. GuaC type 2 subfamily.

It carries out the reaction IMP + NH4(+) + NADP(+) = GMP + NADPH + 2 H(+). Its function is as follows. Catalyzes the irreversible NADPH-dependent deamination of GMP to IMP. It functions in the conversion of nucleobase, nucleoside and nucleotide derivatives of G to A nucleotides, and in maintaining the intracellular balance of A and G nucleotides. This chain is GMP reductase, found in Leptothrix cholodnii (strain ATCC 51168 / LMG 8142 / SP-6) (Leptothrix discophora (strain SP-6)).